The primary structure comprises 607 residues: Dihydroxy-acid dehydratase (607 aa).

Residue aspartate 81 participates in Mg(2+) binding. Cysteine 122 is a binding site for [2Fe-2S] cluster. The Mg(2+) site is built by aspartate 123 and lysine 124. Lysine 124 carries the post-translational modification N6-carboxylysine. Cysteine 195 contacts [2Fe-2S] cluster. Glutamate 489 provides a ligand contact to Mg(2+). Serine 515 acts as the Proton acceptor in catalysis.

Belongs to the IlvD/Edd family. As to quaternary structure, homodimer. [2Fe-2S] cluster is required as a cofactor. Requires Mg(2+) as cofactor.

It carries out the reaction (2R)-2,3-dihydroxy-3-methylbutanoate = 3-methyl-2-oxobutanoate + H2O. The enzyme catalyses (2R,3R)-2,3-dihydroxy-3-methylpentanoate = (S)-3-methyl-2-oxopentanoate + H2O. It participates in amino-acid biosynthesis; L-isoleucine biosynthesis; L-isoleucine from 2-oxobutanoate: step 3/4. The protein operates within amino-acid biosynthesis; L-valine biosynthesis; L-valine from pyruvate: step 3/4. In terms of biological role, functions in the biosynthesis of branched-chain amino acids. Catalyzes the dehydration of (2R,3R)-2,3-dihydroxy-3-methylpentanoate (2,3-dihydroxy-3-methylvalerate) into 2-oxo-3-methylpentanoate (2-oxo-3-methylvalerate) and of (2R)-2,3-dihydroxy-3-methylbutanoate (2,3-dihydroxyisovalerate) into 2-oxo-3-methylbutanoate (2-oxoisovalerate), the penultimate precursor to L-isoleucine and L-valine, respectively. The polypeptide is Dihydroxy-acid dehydratase (Deinococcus radiodurans (strain ATCC 13939 / DSM 20539 / JCM 16871 / CCUG 27074 / LMG 4051 / NBRC 15346 / NCIMB 9279 / VKM B-1422 / R1)).